Consider the following 191-residue polypeptide: Salivary lipocalin (191 aa).

The first 16 residues, 1–16, serve as a signal peptide directing secretion; it reads MKLLLLLCLGLTLASS. N-linked (GlcNAc...) asparagine glycosylation occurs at Asn69. Cys84 and Cys176 are oxidised to a cystine.

It belongs to the calycin superfamily. Lipocalin family. Homodimer. In the submaxillary salivary glands of mature male pigs, but absent from that of females. Expression was much lower in submaxillary glands of castrated male pigs than in sexually mature individuals.

The protein localises to the secreted. Binds pheromones, the pheromones are released from the saliva of males and affect the sexual behavior of females. The sequence is that of Salivary lipocalin (SAL1) from Sus scrofa (Pig).